The chain runs to 99 residues: Small integral membrane protein 14 (99 aa).

The Lumenal portion of the chain corresponds to 1–49; the sequence is MAEGGFDPCECICSHEHAMRRLINLLRQSQSYCTDTECLRELPGPSGDS. Residues 50 to 70 traverse the membrane as a helical segment; the sequence is GISITVILMAWMVIAVLLFLL. The Cytoplasmic portion of the chain corresponds to 71 to 99; it reads RPPNLRGSSLPGKPSSPHSGQDPPAPPVD. Positions 77–99 are disordered; the sequence is GSSLPGKPSSPHSGQDPPAPPVD.

Its subcellular location is the endoplasmic reticulum membrane. The polypeptide is Small integral membrane protein 14 (Smim14) (Rattus norvegicus (Rat)).